The primary structure comprises 358 residues: uncharacterized protein (358 aa).

Residues Cys39, His61, Cys92, Cys95, Cys98, Cys106, and Asp157 each coordinate Zn(2+).

It belongs to the zinc-containing alcohol dehydrogenase family. Requires Zn(2+) as cofactor.

This is an uncharacterized protein from Escherichia coli (strain K12).